The sequence spans 229 residues: uncharacterized protein (229 aa).

The protein to M.pneumoniae MPN_376 central region.

This is an uncharacterized protein from Mycoplasma pneumoniae (strain ATCC 29342 / M129 / Subtype 1) (Mycoplasmoides pneumoniae).